Consider the following 198-residue polypeptide: Transcriptional regulator GfcR (198 aa).

This sequence belongs to the purine/pyrimidine phosphoribosyltransferase family. GfcR subfamily.

In Methanosphaera stadtmanae (strain ATCC 43021 / DSM 3091 / JCM 11832 / MCB-3), this protein is Transcriptional regulator GfcR.